A 168-amino-acid polypeptide reads, in one-letter code: Ribosome maturation factor RimM (168 aa).

A PRC barrel domain is found at 94–167 (DGQYYYHQII…FVTVELMEGL (74 aa)).

Belongs to the RimM family. As to quaternary structure, binds ribosomal protein uS19.

It localises to the cytoplasm. An accessory protein needed during the final step in the assembly of 30S ribosomal subunit, possibly for assembly of the head region. Essential for efficient processing of 16S rRNA. May be needed both before and after RbfA during the maturation of 16S rRNA. It has affinity for free ribosomal 30S subunits but not for 70S ribosomes. The chain is Ribosome maturation factor RimM from Limosilactobacillus reuteri (strain DSM 20016) (Lactobacillus reuteri).